A 308-amino-acid polypeptide reads, in one-letter code: MRKLVVGSRRSKLALTQSRQFIDKLKAIDPSLEIEIKEIVTKGDLIVDKQLSKVGGKGLFVKEIQNELFNHGIDMAIHSLKDVPSVIPDGLTLGCIPDRENPYDAYIAKNHVPLNELPDNSIVGTSSLRRGAQILAKYPKLQIKWIRGNIDTRLNKLETEDYDAIILAAAGLKRMGWSDDIVTSYLDKETLIPAIGQGALGIECRSDDETLLSLLSKVHNQDVADCVTAERTFLTRMNGSCQVPIGGYATKEADGTIEFTGLIMSPDGKERYQHTVRGTDPVALGEEVTKVLNEQGAYEIIKALNEEQ.

C241 is modified (S-(dipyrrolylmethanemethyl)cysteine).

The protein belongs to the HMBS family. In terms of assembly, monomer. Dipyrromethane is required as a cofactor.

It carries out the reaction 4 porphobilinogen + H2O = hydroxymethylbilane + 4 NH4(+). It participates in porphyrin-containing compound metabolism; protoporphyrin-IX biosynthesis; coproporphyrinogen-III from 5-aminolevulinate: step 2/4. Its function is as follows. Tetrapolymerization of the monopyrrole PBG into the hydroxymethylbilane pre-uroporphyrinogen in several discrete steps. The protein is Porphobilinogen deaminase of Staphylococcus saprophyticus subsp. saprophyticus (strain ATCC 15305 / DSM 20229 / NCIMB 8711 / NCTC 7292 / S-41).